The primary structure comprises 935 residues: Isoleucine--tRNA ligase (935 aa).

Positions 58 to 68 (PYANGSIHVGH) match the 'HIGH' region motif. Glutamate 558 serves as a coordination point for L-isoleucyl-5'-AMP. A 'KMSKS' region motif is present at residues 599–603 (KMSKS). Lysine 602 contributes to the ATP binding site. Zn(2+) contacts are provided by cysteine 897, cysteine 900, cysteine 917, and cysteine 920.

The protein belongs to the class-I aminoacyl-tRNA synthetase family. IleS type 1 subfamily. As to quaternary structure, monomer. Zn(2+) serves as cofactor.

It is found in the cytoplasm. It carries out the reaction tRNA(Ile) + L-isoleucine + ATP = L-isoleucyl-tRNA(Ile) + AMP + diphosphate. In terms of biological role, catalyzes the attachment of isoleucine to tRNA(Ile). As IleRS can inadvertently accommodate and process structurally similar amino acids such as valine, to avoid such errors it has two additional distinct tRNA(Ile)-dependent editing activities. One activity is designated as 'pretransfer' editing and involves the hydrolysis of activated Val-AMP. The other activity is designated 'posttransfer' editing and involves deacylation of mischarged Val-tRNA(Ile). The sequence is that of Isoleucine--tRNA ligase from Francisella tularensis subsp. holarctica (strain OSU18).